Reading from the N-terminus, the 414-residue chain is Serpin A3-6 (414 aa).

The signal sequence occupies residues 1–25 (MRTERVSPLLALGILVAGLCSRVHC). N-linked (GlcNAc...) asparagine glycans are attached at residues asparagine 103, asparagine 183, asparagine 233, asparagine 267, and asparagine 321.

Belongs to the serpin family. As to quaternary structure, homodimer.

It is found in the cytoplasmic vesicle. Its subcellular location is the secretory vesicle. It localises to the chromaffin granule. The protein resides in the secreted. In terms of biological role, serine protease inhibitor. The sequence is that of Serpin A3-6 from Bos taurus (Bovine).